The chain runs to 174 residues: Ribosome maturation factor RimP (174 aa).

The protein belongs to the RimP family.

The protein resides in the cytoplasm. Its function is as follows. Required for maturation of 30S ribosomal subunits. The protein is Ribosome maturation factor RimP of Acinetobacter baumannii (strain SDF).